The sequence spans 465 residues: UDP-N-acetylmuramoylalanine--D-glutamate ligase (465 aa).

Residue 127-133 (GSNGKST) participates in ATP binding.

It belongs to the MurCDEF family.

It is found in the cytoplasm. It catalyses the reaction UDP-N-acetyl-alpha-D-muramoyl-L-alanine + D-glutamate + ATP = UDP-N-acetyl-alpha-D-muramoyl-L-alanyl-D-glutamate + ADP + phosphate + H(+). The protein operates within cell wall biogenesis; peptidoglycan biosynthesis. Functionally, cell wall formation. Catalyzes the addition of glutamate to the nucleotide precursor UDP-N-acetylmuramoyl-L-alanine (UMA). This is UDP-N-acetylmuramoylalanine--D-glutamate ligase from Cereibacter sphaeroides (strain ATCC 17029 / ATH 2.4.9) (Rhodobacter sphaeroides).